The sequence spans 137 residues: Proofreading thioesterase EntH (137 aa).

Glu-63 functions as the Nucleophile or proton acceptor in the catalytic mechanism.

The protein belongs to the thioesterase PaaI family. In terms of assembly, homotetramer. Dimer of dimers. Interacts specifically with the aryl carrier protein (ArCP) domain of EntB.

It localises to the cytoplasm. It participates in siderophore biosynthesis; enterobactin biosynthesis. Functionally, required for optimal enterobactin synthesis. Acts as a proofreading enzyme that prevents EntB misacylation by hydrolyzing the thioester bound existing between EntB and wrongly charged molecules. The polypeptide is Proofreading thioesterase EntH (Shigella sonnei (strain Ss046)).